The primary structure comprises 212 residues: uncharacterized protein (212 aa).

The first 20 residues, 1–20, serve as a signal peptide directing secretion; that stretch reads MKNLTIGAIFLIFFAVSAFA.

Its subcellular location is the virion. This is an uncharacterized protein from Acanthamoeba polyphaga (Amoeba).